The sequence spans 494 residues: DEAD-box ATP-dependent RNA helicase CshA (494 aa).

The short motif at 3 to 31 (ITFQDFNLSSDLMKAINRMGFEEATPIQA) is the Q motif element. A Helicase ATP-binding domain is found at 34-204 (IPLGLSNKDV…ERFMTEPEHV (171 aa)). 47–54 (AQTGTGKT) lines the ATP pocket. A DEAD box motif is present at residues 152-155 (DEAD). In terms of domain architecture, Helicase C-terminal spans 215-375 (NIQQFYLEVQ…RMKEPTLDEA (161 aa)). The segment at 413 to 494 (VTVVAAAIKM…SGDRRQKKSY (82 aa)) is required for dimerization or oligomerization. A disordered region spans residues 429–494 (DTPVRLTDEA…SGDRRQKKSY (66 aa)). A compositionally biased stretch (basic residues) spans 443–452 (KRYKNQRSSK). Residues 473–488 (SYDKKRSNDRRSSGDR) are compositionally biased toward basic and acidic residues.

Belongs to the DEAD box helicase family. CshA subfamily. In terms of assembly, homodimer or oligomer. May interact with RNA helicases CshB and DbpA (DeaD). Probably a component of the RNA degradosome complex composed of rny, rnjA, rnjB, pnp, pfkA and eno, and possibly also rnpA (although rnjA and rnjB's presence is unclear). Interacts with ribosomal proteins L1 and L3 (rplA and rplC) and the protein component of RNase RnpA. Interacts with the RNA polymerase core. Requires Mg(2+) as cofactor.

Its subcellular location is the cytoplasm. It is found in the nucleoid. The protein localises to the cell membrane. The enzyme catalyses ATP + H2O = ADP + phosphate + H(+). With respect to regulation, RNA helicase activity is inhibited by EDTA. In terms of biological role, the most abundant DEAD-box RNA helicase. An ATP-dependent RNA helicase with RNA-dependent ATPase activity. May work in conjunction with the cold shock proteins to ensure proper initiation of transcription at low and optimal temperatures. In vitro, unwinds dsRNA in both 5'- and 3'- directions. Plays a role in ribosomal 50S subunit assembly. Its deletion leads to changes in mRNA levels for over 200 transcripts. This Bacillus subtilis (strain 168) protein is DEAD-box ATP-dependent RNA helicase CshA.